Here is a 445-residue protein sequence, read N- to C-terminus: UDP-N-acetylmuramate--L-alanine ligase (445 aa).

108–114 contributes to the ATP binding site; it reads GSDGKTT.

It belongs to the MurCDEF family.

The protein resides in the cytoplasm. The catalysed reaction is UDP-N-acetyl-alpha-D-muramate + L-alanine + ATP = UDP-N-acetyl-alpha-D-muramoyl-L-alanine + ADP + phosphate + H(+). Its pathway is cell wall biogenesis; peptidoglycan biosynthesis. Functionally, cell wall formation. This is UDP-N-acetylmuramate--L-alanine ligase from Pseudothermotoga lettingae (strain ATCC BAA-301 / DSM 14385 / NBRC 107922 / TMO) (Thermotoga lettingae).